Consider the following 210-residue polypeptide: Glutathione S-transferase P (210 aa).

A GST N-terminal domain is found at P2 to G81. Y4 bears the Phosphotyrosine; by EGFR mark. Glutathione-binding positions include Y8, R14, W39, K45, and Q52–L53. T62 carries the phosphothreonine modification. Q65 to S66 serves as a coordination point for glutathione. Positions D83 to I204 constitute a GST C-terminal domain. K103 and K116 each carry N6-succinyllysine. Position 128 is an N6-acetyllysine (K128).

This sequence belongs to the GST superfamily. Pi family. In terms of assembly, homodimer. Interacts with CDK5.

The protein localises to the cytoplasm. It localises to the mitochondrion. The protein resides in the nucleus. It carries out the reaction RX + glutathione = an S-substituted glutathione + a halide anion + H(+). It catalyses the reaction prostaglandin J2 + glutathione = prostaglandin J2-S-(R)-glutathione. The enzyme catalyses prostaglandin J2 + glutathione = prostaglandin J2-S-(S)-glutathione. The catalysed reaction is prostaglandin A2 + glutathione = prostaglandin A2-S-(S)-glutathione. It carries out the reaction 11(S)-hydroxy-14(S),15(S)-epoxy-(5Z,8Z,12E)-eicosatrienoate + glutathione = (11S,15S)-dihydroxy-14(R)-S-glutathionyl-(5Z,8Z,12E)-eicosatrienoate. In terms of biological role, conjugation of reduced glutathione to a wide number of exogenous and endogenous hydrophobic electrophiles. Involved in the formation of glutathione conjugates of both prostaglandin A2 (PGA2) and prostaglandin J2 (PGJ2). Participates in the formation of novel hepoxilin regioisomers. Negatively regulates CDK5 activity via p25/p35 translocation to prevent neurodegeneration. This is Glutathione S-transferase P (GSTP1) from Macaca mulatta (Rhesus macaque).